Consider the following 374-residue polypeptide: uncharacterized protein (374 aa).

A helical membrane pass occupies residues 27-49; the sequence is AISPILALLIVLGVTIVVGAVFY.

The protein localises to the membrane. This is an uncharacterized protein from Methanocaldococcus jannaschii (strain ATCC 43067 / DSM 2661 / JAL-1 / JCM 10045 / NBRC 100440) (Methanococcus jannaschii).